A 363-amino-acid polypeptide reads, in one-letter code: Flagellar P-ring protein (363 aa).

An N-terminal signal peptide occupies residues 1–20; the sequence is MKKLTLVLFGMLFLASSAHA.

Belongs to the FlgI family. As to quaternary structure, the basal body constitutes a major portion of the flagellar organelle and consists of four rings (L,P,S, and M) mounted on a central rod.

Its subcellular location is the periplasm. It is found in the bacterial flagellum basal body. Assembles around the rod to form the L-ring and probably protects the motor/basal body from shearing forces during rotation. The protein is Flagellar P-ring protein of Vibrio atlanticus (strain LGP32) (Vibrio splendidus (strain Mel32)).